Consider the following 354-residue polypeptide: Phenylalanine 4-monooxygenase, chloroplastic (354 aa).

The N-terminal 60 residues, 1–60 (MAFPLQKTFLCSNGQSFPCSNGRSTSTLLASDLKFQRLNKPFILRVGSMQIRNSPKEHPR), are a transit peptide targeting the chloroplast. Residues His229, His234, and Glu274 each coordinate Fe cation.

This sequence belongs to the biopterin-dependent aromatic amino acid hydroxylase family. In terms of assembly, forms monomers. Fe(2+) serves as cofactor.

The protein localises to the plastid. It localises to the chloroplast. The enzyme catalyses (6R)-L-erythro-5,6,7,8-tetrahydrobiopterin + L-phenylalanine + O2 = (4aS,6R)-4a-hydroxy-L-erythro-5,6,7,8-tetrahydrobiopterin + L-tyrosine. Catalyzes the hydroxylation of L-phenylalanine to L-tyrosine. Does not seem to be tetrahydropterin-dependent and shows preference for 10-formyltetrahydrofolate as cosubstrate and electron donor. In Pinus taeda (Loblolly pine), this protein is Phenylalanine 4-monooxygenase, chloroplastic.